A 603-amino-acid polypeptide reads, in one-letter code: Geraniol synthase, chloroplastic (603 aa).

The N-terminal 35 residues, 1–35 (MSSISQKVVIGLNKAAANNNLQNLDRRGFKTRCVS), are a transit peptide targeting the chloroplast. (2E)-geranyl diphosphate is bound by residues Arg319, Asp356, Asp360, Arg497, and Asp500. Residues Asp356 and Asp360 each coordinate Mg(2+). A DDXXD motif motif is present at residues 356–360 (DDVYD). Mg(2+) contacts are provided by Asp500, Thr504, and Glu508.

Belongs to the terpene synthase family. Tpsb subfamily. As to quaternary structure, monomer. Mg(2+) is required as a cofactor. It depends on Mn(2+) as a cofactor.

The protein resides in the plastid. Its subcellular location is the chloroplast. It catalyses the reaction (2E)-geranyl diphosphate + H2O = (2E)-geraniol + diphosphate. The protein operates within secondary metabolite biosynthesis; terpenoid biosynthesis. Functionally, monoterpene synthase (mono-TPS) involved in the biosynthesis of monoterpenes natural products. Catalyzes the conversion of (2E)-geranyl diphosphate (GPP) into geraniol. This chain is Geraniol synthase, chloroplastic, found in Perilla frutescens var. hirtella (Perilla citriodora).